The following is a 466-amino-acid chain: UDP-N-acetylmuramoylalanine--D-glutamate ligase (466 aa).

Gly139–Gly145 provides a ligand contact to ATP.

The protein belongs to the MurCDEF family.

The protein resides in the cytoplasm. The enzyme catalyses UDP-N-acetyl-alpha-D-muramoyl-L-alanine + D-glutamate + ATP = UDP-N-acetyl-alpha-D-muramoyl-L-alanyl-D-glutamate + ADP + phosphate + H(+). The protein operates within cell wall biogenesis; peptidoglycan biosynthesis. Its function is as follows. Cell wall formation. Catalyzes the addition of glutamate to the nucleotide precursor UDP-N-acetylmuramoyl-L-alanine (UMA). This Deinococcus geothermalis (strain DSM 11300 / CIP 105573 / AG-3a) protein is UDP-N-acetylmuramoylalanine--D-glutamate ligase.